Reading from the N-terminus, the 371-residue chain is Putative glutamate--cysteine ligase 2 (371 aa).

Belongs to the glutamate--cysteine ligase type 2 family. YbdK subfamily.

The enzyme catalyses L-cysteine + L-glutamate + ATP = gamma-L-glutamyl-L-cysteine + ADP + phosphate + H(+). ATP-dependent carboxylate-amine ligase which exhibits weak glutamate--cysteine ligase activity. This is Putative glutamate--cysteine ligase 2 from Burkholderia ambifaria (strain MC40-6).